Reading from the N-terminus, the 625-residue chain is Voltage-gated potassium channel KCNC4 (625 aa).

Disordered regions lie at residues methionine 1–cysteine 24 and leucine 65–serine 86. Residues methionine 1–glutamate 28 are inactivation gate. Over methionine 1–arginine 227 the chain is Cytoplasmic. Phosphoserine occurs at positions 8, 9, 15, and 21. The span at aspartate 77–serine 86 shows a compositional bias: gly residues. 4 residues coordinate Zn(2+): histidine 117, cysteine 123, cysteine 144, and cysteine 145. The helical transmembrane segment at valine 228–threonine 248 threads the bilayer. Asparagine 257 and asparagine 266 each carry an N-linked (GlcNAc...) asparagine glycan. A helical membrane pass occupies residues glutamate 279–valine 299. At arginine 300–asparagine 313 the chain is on the cytoplasmic side. Residues leucine 314–glycine 334 form a helical membrane-spanning segment. The helical; Voltage-sensor transmembrane segment at phenylalanine 346–phenylalanine 365 threads the bilayer. Over valine 366 to glutamate 381 the chain is Cytoplasmic. The helical transmembrane segment at phenylalanine 382–tyrosine 402 threads the bilayer. Positions 437, 438, 439, and 440 each coordinate K(+). The short motif at threonine 437–aspartate 442 is the Selectivity filter element. The helical transmembrane segment at valine 453–valine 473 threads the bilayer. Residues asparagine 474 to leucine 625 are Cytoplasmic-facing. Positions proline 490–arginine 581 are disordered. Positions alanine 528 to glutamine 543 are enriched in basic and acidic residues.

Belongs to the potassium channel family. C (Shaw) (TC 1.A.1.2) subfamily. Kv3.4/KCNC4 sub-subfamily. Homotetramer. Heterotetramer of potassium channel proteins. In terms of processing, phosphorylation of serine residues in the inactivation gate inhibits rapid channel closure.

It localises to the membrane. It carries out the reaction K(+)(in) = K(+)(out). Its function is as follows. Voltage-gated potassium channel that opens in response to the voltage difference across the membrane, forming a potassium-selective channel through which potassium ions pass in accordance with their electrochemical gradient. The channel displays rapid activation and inactivation kinetics. In Rattus norvegicus (Rat), this protein is Voltage-gated potassium channel KCNC4.